The primary structure comprises 120 residues: Large ribosomal subunit protein uL18 (120 aa).

The protein belongs to the universal ribosomal protein uL18 family. Part of the 50S ribosomal subunit; part of the 5S rRNA/L5/L18/L25 subcomplex. Contacts the 5S and 23S rRNAs.

In terms of biological role, this is one of the proteins that bind and probably mediate the attachment of the 5S RNA into the large ribosomal subunit, where it forms part of the central protuberance. The polypeptide is Large ribosomal subunit protein uL18 (Rhodopseudomonas palustris (strain BisB5)).